We begin with the raw amino-acid sequence, 140 residues long: Ribonuclease P protein component (140 aa).

Belongs to the RnpA family. In terms of assembly, consists of a catalytic RNA component (M1 or rnpB) and a protein subunit.

The enzyme catalyses Endonucleolytic cleavage of RNA, removing 5'-extranucleotides from tRNA precursor.. In terms of biological role, RNaseP catalyzes the removal of the 5'-leader sequence from pre-tRNA to produce the mature 5'-terminus. It can also cleave other RNA substrates such as 4.5S RNA. The protein component plays an auxiliary but essential role in vivo by binding to the 5'-leader sequence and broadening the substrate specificity of the ribozyme. The sequence is that of Ribonuclease P protein component from Nostoc punctiforme (strain ATCC 29133 / PCC 73102).